Reading from the N-terminus, the 289-residue chain is 7-methylguanosine phosphate-specific 5'-nucleotidase (289 aa).

Aspartate 38 serves as the catalytic Nucleophile. Mg(2+) contacts are provided by aspartate 38 and aspartate 40. The active-site Proton donor is the aspartate 40. Residue glutamate 85 coordinates CMP. Residue glutamate 85 coordinates N(7)-methyl-GMP. Residues 153-154 (SA) and lysine 202 each bind substrate. A Mg(2+)-binding site is contributed by aspartate 227.

This sequence belongs to the pyrimidine 5'-nucleotidase family. Monomer.

It localises to the cytoplasm. It catalyses the reaction N(7)-methyl-GMP + H2O = N(7)-methylguanosine + phosphate. The enzyme catalyses CMP + H2O = cytidine + phosphate. The catalysed reaction is a ribonucleoside 5'-phosphate + H2O = a ribonucleoside + phosphate. Specifically hydrolyzes 7-methylguanosine monophosphate (m(7)GMP) to 7-methylguanosine and inorganic phosphate. The specific activity for m(7)GMP may protect cells against undesired salvage of m(7)GMP and its incorporation into nucleic acids. Also has weak activity for CMP. UMP and purine nucleotides are poor substrates. The sequence is that of 7-methylguanosine phosphate-specific 5'-nucleotidase (NT5C3B) from Gallus gallus (Chicken).